Here is a 2283-residue protein sequence, read N- to C-terminus: MVLRNSGRRHPEPGADGEGSRDDGPSSSVSALKRLERSQWTDKMDLRFGFERLKEPGERTGWLINMHPTEILDEDKRLVSAVDYYFIQDDGSRFKVALPYMPYFYIAARKGCDREVSSFLSKKFQGKIAKLENVPKEDLDLPNHLVGLKRSYIKLSFHTVEDLVKVRKEISPAVKKNREQDHASDEYTTMLSSILQGGSVITDEDETSKKIADQLDNIVDMREYDVPYHIRLSIDLRIHVAHWYNVRFRGNAFPVEITRRDDLVERPDPVVLAFDIETTKLPLKFPDAETDQIMMISYMIDGQGYLITNREIVSEDIEDFEFTPKPEYEGPFCVFNEPDEVHLIQRWFEHIQETKPTIMVTYNGDFFDWPFVEARAAIHGLSMYQEIGFQKDSQGEYKAPQCIHMDCLRWVKRDSYLPVGSHNLKAAAKAKLGYDPVELDPEDMCRMATEQPQTLATYSVSDAVATYYLYMKYVHPFIFALCTIIPMEPDEVLRKGSGTLCEALLMVQAFHANIIFPNKQEQEFNKLTDDGHMLDAETYVGGHVEALESGVFRSDIPCRFRMNPAAFDFLLQRVEKTMRHAIEEEEKVPVEQATNFQEVCEQIKTKLTSLKDVPNRIECPLIYHLDVGAMYPNIILTNRLQPSAIVDEATCAACDFNKPGASCQRKMAWQWRGEFMPASRSEYHRIQHQLESEKFPPLFPEGPARAFHELSREEQAKYEKRRLADYCRKAYKKIHVTKVEERLTTICQRENSFYVDTVRAFRDRRYEFKGLHKVWKKKLSAAVEVGDASEVKRCKNMEILYDSLQLAHKCILNSFYGYVMRKGARWYSMEMAGIVCFTGANIITQARELIEQIGRPLELDTDGIWCVLPNSFPENFVIKTTNAKKPKLTISYPGAMLNIMVKEGFTNHQYQELTEPSSLTYVTHSENSIFFEVDGPYLAMILPASKEEGKKLKKRYAVFNEDGSLAELKGFEVKRRGELQLIKIFQSSVFEAFLKGSTLEEVYGSVAKVADYWLDVLYSKAANMPDSELFELISENRSMSRKLEDYGEQKSTSISTAKRLAEFLGDQMVKDAGLSCRYIISRKPEGSPVTERAIPLAIFQAEPTVRKHFLRKWLKSSSLQDFDIRTILDWDYYIERLGSAIQKIITIPAALQQVKNPVPRVKHPDWLHKKLLEKNDIYKQKKISELFVLEGKRQIVMAQASENSLSLCTPDMEDIGLTKPHHSTVPVATKRKRVWETQKESQDIALTVPWQEVLGQPPSLGTTQEEWLVWLQFHKKKWQLQAQQRLALRKKQRLESAEDMPRLGPIREGPSTGLGSFLRRTARSIMDLPWQIIQISETRQAGLFRLWAIIGNDLHCIKLSIPRVFYVNQRVAKAEDGPAYRKVNRALPRSNIVYNLYEYSVPEDMYQEHINEINTELSVPDIEGVYETQVPLLFRALVQLGCVCVVNKQLTRHLSGWEAETFALEHLEMRSLAQFSYLEPGSIRHIYLYHHTQGHKALFGVFIPSQRRASVFVLDTVRSNQMPGLSALYSSEHSLLLDKVDPKLLPPPKHTFEVRAETNLKTICRAIQRFLLAYKEERRGPTLIAVQSSWELCRLTSEIPVLEEFPLVPIRVADKISYAVLDWQRHGARRMIRHYLNLDLCLSQAFEMSRYFHIPVGNLPEDISTFGSDLFFARHLQHHNHLLWLSPTSRPDLGGKEADDNRLVMEFDDRATVEINSSGCYSTVCVELDIQNLAVNTILQSHHVNDMEGAGSMGISFDVIQQASLEDMVTGNQAASALANYDETALCSSTFRILKSMVVGWVKEITQYHNIYADNQVMHFYRWLQSPCSLLHDPALHRTLHNMMKKLFLQLIAEFKRLGSSVVYANFNRIILCTKKRRIEDALAYVEYITNSIHSKEIFHSLTISFSRCWEFLLWMDPSNYGGIKGKVPSSIHCGQVKEQDSQAREETDEEEEDKEKDEEEEGMGESEVEDLLENNWNILQFLPQAASCQSYFLMIVSAYIVAVYQSMKEELRHSAPGSTPVKRKGASQFSQESEGATGSLPGMITFSQDYVANELTQSFFTITQKIQKKVTGSRNTTEPSEMFPVLPGSHLLLNNPALEFIKYVCKVLSLDTNITNQVNKLNRDLLRLVDVGEFSEEAQFRDPCHSYVLPEVICHSCNFCRDLDLCKDSSFSQDGAILPQWLCSNCQAPYDSSAIESALVEALQRKLMAFTLQDLVCLKCRGMKETHMPVYCSCAGDFTLTIRTEVFMEQIRIFQNIAKYYSMSYLQETIEWLLQTSPVSNC.

Positions M1–L32 are disordered. The span at R9–G24 shows a compositional bias: basic and acidic residues. Residues S1184, S1296, and S1316 each carry the phosphoserine modification. Disordered regions lie at residues G1935 to E1968 and H2014 to L2041. Residues Q1936–E1946 show a composition bias toward basic and acidic residues. Residues E1947 to E1968 are compositionally biased toward acidic residues. Over residues S2028 to A2037 the composition is skewed to polar residues. Zn(2+) contacts are provided by C2155, C2158, C2184, and C2187. A CysA-type zinc finger spans residues C2155 to C2187. [4Fe-4S] cluster contacts are provided by C2218, C2221, C2233, and C2235. The CysB motif motif lies at C2218–C2235.

Belongs to the DNA polymerase type-B family. In terms of assembly, component of the DNA polymerase epsilon complex consisting of four subunits: the catalytic subunit POLE and the accessory subunits POLE2, POLE3 and POLE4. Interacts with RAD17 and TOPBP1. Requires [4Fe-4S] cluster as cofactor.

The protein localises to the nucleus. The enzyme catalyses DNA(n) + a 2'-deoxyribonucleoside 5'-triphosphate = DNA(n+1) + diphosphate. Catalytic component of the DNA polymerase epsilon complex. Participates in chromosomal DNA replication. Required during synthesis of the leading DNA strands at the replication fork and binds at/or near replication origins and moves along DNA with the replication fork. Has 3'-5' proofreading exonuclease activity that corrects errors arising during DNA replication. It is also involved in DNA synthesis during DNA repair. This is DNA polymerase epsilon catalytic subunit A (Pole) from Mus musculus (Mouse).